The sequence spans 479 residues: Aspartyl/glutamyl-tRNA(Asn/Gln) amidotransferase subunit B (479 aa).

The protein belongs to the GatB/GatE family. GatB subfamily. In terms of assembly, heterotrimer of A, B and C subunits.

The catalysed reaction is L-glutamyl-tRNA(Gln) + L-glutamine + ATP + H2O = L-glutaminyl-tRNA(Gln) + L-glutamate + ADP + phosphate + H(+). It carries out the reaction L-aspartyl-tRNA(Asn) + L-glutamine + ATP + H2O = L-asparaginyl-tRNA(Asn) + L-glutamate + ADP + phosphate + 2 H(+). In terms of biological role, allows the formation of correctly charged Asn-tRNA(Asn) or Gln-tRNA(Gln) through the transamidation of misacylated Asp-tRNA(Asn) or Glu-tRNA(Gln) in organisms which lack either or both of asparaginyl-tRNA or glutaminyl-tRNA synthetases. The reaction takes place in the presence of glutamine and ATP through an activated phospho-Asp-tRNA(Asn) or phospho-Glu-tRNA(Gln). This is Aspartyl/glutamyl-tRNA(Asn/Gln) amidotransferase subunit B from Streptococcus pyogenes serotype M28 (strain MGAS6180).